Here is a 508-residue protein sequence, read N- to C-terminus: Vacuolar serine-type carboxypeptidase ATG42 (508 aa).

The signal sequence occupies residues 1 to 24 (MKYLNLVFVLQLLISIKYASFGRA). 5 disulfide bridges follow: Cys132-Cys375, Cys267-Cys281, Cys291-Cys314, Cys298-Cys307, and Cys336-Cys345. Asn163 carries an N-linked (GlcNAc...) asparagine glycan. The active site involves Ser219. Asn242 is a glycosylation site (N-linked (GlcNAc...) asparagine). Residues Asn339 and Asn371 are each glycosylated (N-linked (GlcNAc...) asparagine). The active site involves Asp415. Residue Cys418 coordinates substrate. Residue His474 is part of the active site. Substrate is bound at residue Met475.

The protein belongs to the peptidase S10 family.

It is found in the vacuole lumen. It catalyses the reaction Release of a C-terminal amino acid with broad specificity.. In terms of biological role, vacuolar serine-type carboxypeptidase involved in vacuolar zymogen activation, breakdown of the autophagic body, and autophagosome-dependent protein synthesis. Plays a key role in phytochelatin (PC) synthesis from glutathione (GSH) by cleaving the Gly from GSH and form the PC-peptides of the structure (gamma-Glu-Cys)2-Gly. Also involved in resistance to xenobiotics via the degradation of glutathione-S-conjugates. The protein is Vacuolar serine-type carboxypeptidase ATG42 of Saccharomyces cerevisiae (strain ATCC 204508 / S288c) (Baker's yeast).